The following is a 431-amino-acid chain: Histidinol dehydrogenase (431 aa).

NAD(+) is bound by residues Y130, Q191, and N214. Residues S237, Q259, and H262 each coordinate substrate. Residues Q259 and H262 each coordinate Zn(2+). Catalysis depends on proton acceptor residues E327 and H328. Substrate is bound by residues H328, D361, E415, and H420. D361 is a binding site for Zn(2+). H420 lines the Zn(2+) pocket.

It belongs to the histidinol dehydrogenase family. Zn(2+) is required as a cofactor.

It carries out the reaction L-histidinol + 2 NAD(+) + H2O = L-histidine + 2 NADH + 3 H(+). Its pathway is amino-acid biosynthesis; L-histidine biosynthesis; L-histidine from 5-phospho-alpha-D-ribose 1-diphosphate: step 9/9. In terms of biological role, catalyzes the sequential NAD-dependent oxidations of L-histidinol to L-histidinaldehyde and then to L-histidine. This Rhodopseudomonas palustris (strain ATCC BAA-98 / CGA009) protein is Histidinol dehydrogenase.